The primary structure comprises 368 residues: 3-dehydroquinate synthase (368 aa).

Residues 109-113 (GVIGD), 133-134 (TS), lysine 146, lysine 155, and 173-176 (TLQT) contribute to the NAD(+) site. Zn(2+) is bound by residues glutamate 188, histidine 253, and histidine 270.

This sequence belongs to the sugar phosphate cyclases superfamily. Dehydroquinate synthase family. It depends on Co(2+) as a cofactor. The cofactor is Zn(2+). NAD(+) serves as cofactor.

The protein resides in the cytoplasm. It catalyses the reaction 7-phospho-2-dehydro-3-deoxy-D-arabino-heptonate = 3-dehydroquinate + phosphate. It participates in metabolic intermediate biosynthesis; chorismate biosynthesis; chorismate from D-erythrose 4-phosphate and phosphoenolpyruvate: step 2/7. In terms of biological role, catalyzes the conversion of 3-deoxy-D-arabino-heptulosonate 7-phosphate (DAHP) to dehydroquinate (DHQ). This is 3-dehydroquinate synthase from Synechococcus sp. (strain ATCC 27144 / PCC 6301 / SAUG 1402/1) (Anacystis nidulans).